A 1960-amino-acid polypeptide reads, in one-letter code: [F-actin]-monooxygenase MICAL3 (1960 aa).

The monooxygenase domain stretch occupies residues 2–494 (EESKNEATNR…RHLYDTGDTK (493 aa)). FAD-binding positions include C97, 116–118 (EKR), 123–125 (RNN), F183, Y298, and D398. The region spanning 518–624 (VARSSKLLGW…YLTQFYEMFK (107 aa)) is the Calponin-homology (CH) domain. Residue S649 is modified to Phosphoserine. The interval 658 to 704 (GQTISRKRSPKDKKEKDLDGAGKRRKTSQSEEEDTPRGHRGARPTLV) is disordered. The span at 669 to 679 (DKKEKDLDGAG) shows a compositional bias: basic and acidic residues. 2 positions are modified to phosphoserine: S685 and S687. In terms of domain architecture, LIM zinc-binding spans 762-824 (DTCYFCQKRV…KPHYCYRLSG (63 aa)). Zn(2+)-binding residues include C764, C767, H785, C788, C791, C794, C814, and H817. Disordered regions lie at residues 826–887 (AQRK…LRGT) and 906–1295 (LEEV…EALK). T887 bears the Phosphothreonine mark. S971 bears the Phosphoserine mark. A compositionally biased stretch (acidic residues) spans 984-1014 (GEEEEEDEEDEEEEEEEEDEEDEEEDEDESS). 2 stretches are compositionally biased toward basic and acidic residues: residues 1039-1051 (HWTH…EERA) and 1072-1084 (DVDS…KGEA). Residues S1129, S1139, S1156, and S1188 each carry the phosphoserine modification. 2 stretches are compositionally biased toward pro residues: residues 1192-1203 (SPLPEPSTPPAE) and 1217-1233 (RTPP…PPTQ). The residue at position 1250 (S1250) is a Phosphoserine. The residue at position 1252 (T1252) is a Phosphothreonine. Residues S1254, S1286, and S1313 each carry the phosphoserine modification. The span at 1277 to 1286 (QGVTKDTLGS) shows a compositional bias: polar residues. 2 disordered regions span residues 1316-1550 (LTPV…KRGL) and 1564-1782 (RMRA…EEEL). A Phosphothreonine modification is found at T1317. Positions 1379–1393 (PDREPKGPREEHRDL) are enriched in basic and acidic residues. Positions 1394-1406 (SSSSGLGLQGSSS) are enriched in low complexity. S1404 is subject to Phosphoserine. The span at 1407-1425 (RTRTPGSQSFNTSDSTMLT) shows a compositional bias: polar residues. Residue T1425 is modified to Phosphothreonine. The span at 1485 to 1503 (SVDEIPFADDVEDTYDDNT) shows a compositional bias: acidic residues. The segment covering 1594–1611 (AAAAPRTPRTPAPRRATA) has biased composition (low complexity). Positions 1616-1627 (GPEEPAPRHEAT) are enriched in basic and acidic residues. Low complexity predominate over residues 1633–1653 (SPPSDSGGPDGSVTSSEGSSG). Over residues 1654 to 1672 (KSKKRSSLFSPRRSKKEKK) the composition is skewed to basic residues. 2 positions are modified to phosphoserine: S1660 and S1663. Positions 1718–1727 (CPSTPSSGTT) are enriched in polar residues. A compositionally biased stretch (basic and acidic residues) spans 1762–1778 (VLERTSQKSRKEPRTYT). Residues 1779–1952 (EEELNAKLTR…DKDLEAAMLS (174 aa)) are a coiled coil. The bMERB domain occupies 1799-1948 (KQEELKRLHR…EKEEDKDLEA (150 aa)). Phosphoserine is present on S1870.

The protein belongs to the Mical family. In terms of assembly, interacts with RAB1B, RAB8A, RAB10, RAB13 and RAB15 (in their GTP-bound forms); binding to RAB1B is of low affinity compared to other Rab proteins; at least in case of RAB8A can bind 2 molecules of RAB8A simultaneously through a high and a low affinity binding site, respectively. Interacts with ERC1 and RAB8A; may bridge ERC1 with RAB8A. Interacts with KIF23 and ERC1; enhances the interaction between KIF23 and ERC1. Interacts with NINL. FAD is required as a cofactor.

The protein localises to the cytoplasm. It localises to the cell cortex. It is found in the cytoskeleton. The protein resides in the nucleus. Its subcellular location is the midbody. The protein localises to the spindle. It localises to the cilium basal body. The catalysed reaction is L-methionyl-[F-actin] + NADPH + O2 + H(+) = L-methionyl-(R)-S-oxide-[F-actin] + NADP(+) + H2O. Monooxygenase that promotes depolymerization of F-actin by mediating oxidation of specific methionine residues on actin to form methionine-sulfoxide, resulting in actin filament disassembly and preventing repolymerization. In the absence of actin, it also functions as a NADPH oxidase producing H(2)O(2). Seems to act as Rab effector protein and play a role in vesicle trafficking. Involved in exocytic vesicles tethering and fusion: the monooxygenase activity is required for this process and implicates RAB8A associated with exocytotic vesicles. Required for cytokinesis. Contributes to stabilization and/or maturation of the intercellular bridge independently of its monooxygenase activity. Promotes recruitment of Rab8 and ERC1 to the intercellular bridge, and together these proteins are proposed to function in timely abscission. In Bos taurus (Bovine), this protein is [F-actin]-monooxygenase MICAL3 (MICAL3).